The primary structure comprises 273 residues: Formamidopyrimidine-DNA glycosylase (273 aa).

The Schiff-base intermediate with DNA role is filled by Pro2. Glu3 functions as the Proton donor in the catalytic mechanism. The active-site Proton donor; for beta-elimination activity is Lys58. DNA contacts are provided by His91 and Arg110. Residues 238–272 form an FPG-type zinc finger; it reads QVYGKTGQPCPRCASMIVKIKLGGRGTHLCPHCQK. The Proton donor; for delta-elimination activity role is filled by Arg262.

Belongs to the FPG family. In terms of assembly, monomer. It depends on Zn(2+) as a cofactor.

It carries out the reaction Hydrolysis of DNA containing ring-opened 7-methylguanine residues, releasing 2,6-diamino-4-hydroxy-5-(N-methyl)formamidopyrimidine.. The enzyme catalyses 2'-deoxyribonucleotide-(2'-deoxyribose 5'-phosphate)-2'-deoxyribonucleotide-DNA = a 3'-end 2'-deoxyribonucleotide-(2,3-dehydro-2,3-deoxyribose 5'-phosphate)-DNA + a 5'-end 5'-phospho-2'-deoxyribonucleoside-DNA + H(+). Functionally, involved in base excision repair of DNA damaged by oxidation or by mutagenic agents. Acts as a DNA glycosylase that recognizes and removes damaged bases. Has a preference for oxidized purines, such as 7,8-dihydro-8-oxoguanine (8-oxoG). Has AP (apurinic/apyrimidinic) lyase activity and introduces nicks in the DNA strand. Cleaves the DNA backbone by beta-delta elimination to generate a single-strand break at the site of the removed base with both 3'- and 5'-phosphates. This is Formamidopyrimidine-DNA glycosylase from Streptococcus thermophilus (strain CNRZ 1066).